We begin with the raw amino-acid sequence, 430 residues long: Serine--tRNA ligase (430 aa).

238 to 240 serves as a coordination point for L-serine; that stretch reads TAE. 269-271 contacts ATP; that stretch reads RRE. Residue glutamate 292 participates in L-serine binding. Residue 356 to 359 coordinates ATP; the sequence is EISS. Serine 392 contacts L-serine.

Belongs to the class-II aminoacyl-tRNA synthetase family. Type-1 seryl-tRNA synthetase subfamily. Homodimer. The tRNA molecule binds across the dimer.

The protein resides in the cytoplasm. The enzyme catalyses tRNA(Ser) + L-serine + ATP = L-seryl-tRNA(Ser) + AMP + diphosphate + H(+). The catalysed reaction is tRNA(Sec) + L-serine + ATP = L-seryl-tRNA(Sec) + AMP + diphosphate + H(+). It participates in aminoacyl-tRNA biosynthesis; selenocysteinyl-tRNA(Sec) biosynthesis; L-seryl-tRNA(Sec) from L-serine and tRNA(Sec): step 1/1. In terms of biological role, catalyzes the attachment of serine to tRNA(Ser). Is also able to aminoacylate tRNA(Sec) with serine, to form the misacylated tRNA L-seryl-tRNA(Sec), which will be further converted into selenocysteinyl-tRNA(Sec). The chain is Serine--tRNA ligase from Synechocystis sp. (strain ATCC 27184 / PCC 6803 / Kazusa).